The primary structure comprises 252 residues: Imidazole glycerol phosphate synthase subunit HisF (252 aa).

Residues aspartate 11 and aspartate 130 contribute to the active site.

It belongs to the HisA/HisF family. Heterodimer of HisH and HisF.

The protein localises to the cytoplasm. The enzyme catalyses 5-[(5-phospho-1-deoxy-D-ribulos-1-ylimino)methylamino]-1-(5-phospho-beta-D-ribosyl)imidazole-4-carboxamide + L-glutamine = D-erythro-1-(imidazol-4-yl)glycerol 3-phosphate + 5-amino-1-(5-phospho-beta-D-ribosyl)imidazole-4-carboxamide + L-glutamate + H(+). Its pathway is amino-acid biosynthesis; L-histidine biosynthesis; L-histidine from 5-phospho-alpha-D-ribose 1-diphosphate: step 5/9. IGPS catalyzes the conversion of PRFAR and glutamine to IGP, AICAR and glutamate. The HisF subunit catalyzes the cyclization activity that produces IGP and AICAR from PRFAR using the ammonia provided by the HisH subunit. The sequence is that of Imidazole glycerol phosphate synthase subunit HisF from Bacillus cereus (strain AH820).